Consider the following 419-residue polypeptide: Transcription factor 7 (419 aa).

Gly residues predominate over residues 1–12 (MPQLDSGGGGAG). Positions 1 to 60 (MPQLDSGGGGAGRGDDLGAPDELLAFQDEGEEQDDKNRDSPVGPERDLAELKSSLVNESE) are CTNNB1-binding. Disordered stretches follow at residues 1–111 (MPQL…LKAP) and 134–200 (PASG…SGFY). 2 stretches are compositionally biased toward basic and acidic residues: residues 35-50 (DKNR…DLAE) and 86-109 (LGRE…DGLK). Over residues 143–158 (QPQPPLHNKPGQPPHG) the composition is skewed to pro residues. The HMG box DNA-binding region spans 304–372 (IKKPLNAFML…LHMQLYPGWS (69 aa)). Positions 374 to 406 (RDNYGKKKRRSREKHQESTTGGKRNAFGTYPEK) are disordered. A Nuclear localization signal motif is present at residues 379 to 385 (KKKRRSR).

It belongs to the TCF/LEF family. As to quaternary structure, binds the armadillo repeat of CTNNB1 and forms a stable complex. Binds TLE5, TLE1, TLE2, TLE3 and TLE4. Interacts with MLLT11. Interacts with DAZAP2. In terms of assembly, interacts (via N-terminus) with SOX13; inhibits WNT-mediated transcriptional activity. In terms of tissue distribution, T-cell specific. Expressed in triple negative 2 subpopulations of T-cells and both the gamma-delta and alpha-beta T-cell lineages. Expressed in Il7 receptor positive innate-like T-cells in the mesenteric lymph nodes and spleen (at protein level).

The protein resides in the nucleus. Its function is as follows. Transcriptional activator involved in T-cell lymphocyte differentiation. Necessary for the survival of CD4(+) CD8(+) immature thymocytes. Isoforms lacking the N-terminal CTNNB1 binding domain cannot fulfill this role. Binds to the T-lymphocyte-specific enhancer element (5'-WWCAAAG-3') found in the promoter of the CD3E gene. Represses expression of the T-cell receptor gamma gene in alpha-beta T-cell lineages. Inhibits the developmental program of IL17A effector gamma-delta T-cell subsets via regulating the transcription of T-cell lineage effector proteins. Required for the development of natural killer receptor-positive lymphoid tissue inducer T-cells. TLE1, TLE2, TLE3 and TLE4 repress transactivation mediated by TCF7 and CTNNB1. May also act as feedback transcriptional repressor of CTNNB1 and TCF7L2 target genes. In Mus musculus (Mouse), this protein is Transcription factor 7.